The primary structure comprises 575 residues: Reverse gyrse subunit B (575 aa).

Residues Met1 to Glu39 form an RG N-terminal-type; degenerate zinc finger. Residues Gln83 and Ala100–Thr107 contribute to the ATP site. Residues Phe87–Glu247 enclose the Helicase ATP-binding domain. The DEAD box signature appears at Asp204–Asp207. In terms of domain architecture, Helicase C-terminal spans Gln316–Glu465.

This sequence belongs to the DEAD box helicase family. DDVD subfamily. In terms of assembly, heterodimer of an RgyA and RgyB subunit.

Its subcellular location is the cytoplasm. The enzyme catalyses ATP + H2O = ADP + phosphate + H(+). In terms of biological role, modifies the topological state of DNA by introducing positive supercoils in an ATP-dependent process. Binds to single-stranded DNA, transiently cleaves and then rejoins the end, introducing a positive supercoil in the process. The scissile phosphodiester is attacked by the catalytic tyrosine of the enzyme, resulting in the formation of a DNA-(5'-phosphotyrosyl)-enzyme intermediate. Probably involved in rewinding DNA strands in regions of the chromosome that have opened up to allow replication, transcription, DNA repair or for DNA protection. Reconstituted holoenzyme binds dsDNA a bit better than ssDNA, this subunit preferentially binds dsDNA. In isolation this subunit has DNA-stimulated ATPase activity that is stimulated by topoisomerase-domain containing RgyA. This subunit inhibits the relaxation activity of the topoisomerase subunit while promoting positive supercoiling. In Nanoarchaeum equitans (strain Kin4-M), this protein is Reverse gyrse subunit B.